Consider the following 618-residue polypeptide: Glutamine--fructose-6-phosphate aminotransferase [isomerizing] (618 aa).

The Nucleophile; for GATase activity role is filled by Cys2. The 225-residue stretch at 2–226 folds into the Glutamine amidotransferase type-2 domain; that stretch reads CGIVGYAGRN…DFETAVLTPD (225 aa). The segment at 72 to 91 is disordered; it reads WATHGRPSTENAHPHNSGGN. 2 SIS domains span residues 295 to 434 and 467 to 608; these read NDDE…VRGK and CAEN…IDKP. Lys613 acts as the For Fru-6P isomerization activity in catalysis.

In terms of assembly, homodimer.

The protein resides in the cytoplasm. The catalysed reaction is D-fructose 6-phosphate + L-glutamine = D-glucosamine 6-phosphate + L-glutamate. Catalyzes the first step in hexosamine metabolism, converting fructose-6P into glucosamine-6P using glutamine as a nitrogen source. In Methanosarcina mazei (strain ATCC BAA-159 / DSM 3647 / Goe1 / Go1 / JCM 11833 / OCM 88) (Methanosarcina frisia), this protein is Glutamine--fructose-6-phosphate aminotransferase [isomerizing].